A 238-amino-acid polypeptide reads, in one-letter code: Flagellar L-ring protein (238 aa).

An N-terminal signal peptide occupies residues 1–17 (MIRKTLAASCAVLLMAG). The N-palmitoyl cysteine moiety is linked to residue Cys18. Cys18 is lipidated: S-diacylglycerol cysteine.

It belongs to the FlgH family. As to quaternary structure, the basal body constitutes a major portion of the flagellar organelle and consists of four rings (L,P,S, and M) mounted on a central rod.

The protein localises to the cell outer membrane. Its subcellular location is the bacterial flagellum basal body. Functionally, assembles around the rod to form the L-ring and probably protects the motor/basal body from shearing forces during rotation. This is Flagellar L-ring protein from Nitratidesulfovibrio vulgaris (strain ATCC 29579 / DSM 644 / CCUG 34227 / NCIMB 8303 / VKM B-1760 / Hildenborough) (Desulfovibrio vulgaris).